The sequence spans 204 residues: Holliday junction branch migration complex subunit RuvA (204 aa).

The domain I stretch occupies residues 1 to 64 (MIGKLKGTIE…EDQIRLFGFM (64 aa)). The segment at 65 to 143 (AVLEREWFNL…AFAGEATNIG (79 aa)) is domain II. Residues 144–151 (FKQELGEG) form a flexible linker region. Positions 152-204 (VAPAPVSDAVSALTNLGYSRDQAANAIAAAMKVAGDEADSAKLIRLGLKELSR) are domain III.

This sequence belongs to the RuvA family. In terms of assembly, homotetramer. Forms an RuvA(8)-RuvB(12)-Holliday junction (HJ) complex. HJ DNA is sandwiched between 2 RuvA tetramers; dsDNA enters through RuvA and exits via RuvB. An RuvB hexamer assembles on each DNA strand where it exits the tetramer. Each RuvB hexamer is contacted by two RuvA subunits (via domain III) on 2 adjacent RuvB subunits; this complex drives branch migration. In the full resolvosome a probable DNA-RuvA(4)-RuvB(12)-RuvC(2) complex forms which resolves the HJ.

Its subcellular location is the cytoplasm. The RuvA-RuvB-RuvC complex processes Holliday junction (HJ) DNA during genetic recombination and DNA repair, while the RuvA-RuvB complex plays an important role in the rescue of blocked DNA replication forks via replication fork reversal (RFR). RuvA specifically binds to HJ cruciform DNA, conferring on it an open structure. The RuvB hexamer acts as an ATP-dependent pump, pulling dsDNA into and through the RuvAB complex. HJ branch migration allows RuvC to scan DNA until it finds its consensus sequence, where it cleaves and resolves the cruciform DNA. In Rhizobium rhizogenes (strain K84 / ATCC BAA-868) (Agrobacterium radiobacter), this protein is Holliday junction branch migration complex subunit RuvA.